We begin with the raw amino-acid sequence, 292 residues long: uncharacterized protein (292 aa).

10 consecutive transmembrane segments (helical) span residues 6 to 26, 32 to 52, 68 to 88, 94 to 114, 123 to 143, 147 to 167, 182 to 202, 214 to 234, 242 to 262, and 265 to 285; these read LGII…KVGI, LLFS…ILFI, IIMS…GMQF, TSVL…FSLN, MGLV…MLNI, ALFG…ANVF, AWHL…FEAV, SLLF…FWVL, ASMA…LQLH, and ITIN…MNTF. 2 consecutive EamA domains span residues 13 to 137 and 159 to 285; these read LIWG…FIFG and LSWG…MNTF.

This sequence belongs to the EamA transporter family.

The protein resides in the cell membrane. This is an uncharacterized protein from Bacillus subtilis (strain 168).